A 184-amino-acid polypeptide reads, in one-letter code: Peptidyl-tRNA hydrolase (184 aa).

Y13 lines the tRNA pocket. H18 functions as the Proton acceptor in the catalytic mechanism. Residues F59, N61, and N105 each coordinate tRNA.

This sequence belongs to the PTH family. As to quaternary structure, monomer.

Its subcellular location is the cytoplasm. The catalysed reaction is an N-acyl-L-alpha-aminoacyl-tRNA + H2O = an N-acyl-L-amino acid + a tRNA + H(+). Functionally, hydrolyzes ribosome-free peptidyl-tRNAs (with 1 or more amino acids incorporated), which drop off the ribosome during protein synthesis, or as a result of ribosome stalling. Its function is as follows. Catalyzes the release of premature peptidyl moieties from peptidyl-tRNA molecules trapped in stalled 50S ribosomal subunits, and thus maintains levels of free tRNAs and 50S ribosomes. This chain is Peptidyl-tRNA hydrolase, found in Sulfurimonas denitrificans (strain ATCC 33889 / DSM 1251) (Thiomicrospira denitrificans (strain ATCC 33889 / DSM 1251)).